The primary structure comprises 235 residues: Adapter protein MecA (235 aa).

Basic and acidic residues predominate over residues Leu-113–Ser-135. Residues Leu-113–Gln-136 are disordered.

It belongs to the MecA family. In terms of assembly, homodimer.

Enables the recognition and targeting of unfolded and aggregated proteins to the ClpC protease or to other proteins involved in proteolysis. The chain is Adapter protein MecA from Leuconostoc mesenteroides subsp. mesenteroides (strain ATCC 8293 / DSM 20343 / BCRC 11652 / CCM 1803 / JCM 6124 / NCDO 523 / NBRC 100496 / NCIMB 8023 / NCTC 12954 / NRRL B-1118 / 37Y).